We begin with the raw amino-acid sequence, 1909 residues long: MEGKRQLEKRDFGKRLSLDSSLVEYMDSNKYIEHLLTQLEEQHRSLWREKLAVARLQREVAQRTSEGAMHEKLIHELEEERHLRLQSEKRLQEVTLESERNRIQMRSLQQQFSRMEETVRNLLQSQGSPEQKKEETVNIMVYQEKLSEEERKHKEALEDLHMVVDEDSRSESSSTDEGKEKTKLLLERLKALEAENSALALENENQREQYERCLDEVANQVVQALLTQKDLREECVKLKTRVFDLEQQNRTLSILFQQRVRPTSDLLLQKLHSRLLDLSSGDLLSEVERNRSLTQSRTDAEVHEHQLNTKSALKCPGLGAVIPGHLCPRNSYSSSSELSLSSTCSEYSSGSSYTWHDGKNLRKRQSSQNWDKRLSIDSSLPSGFASPTNELPPTRIKESHILEGLRKLQKRKVLLEPPSVITKWGYKDCMNSNEGIYSPGIKSSSLKEYPPCKTADLGSPCKEPHKTFVYDLDSHVDADDDPSTLALLQAVPNQSCRPHGSKLTHSVSDSLFGWETNRKHFLEGTSSVYPKERPEKLTSCASSCPLEMKLCPSVQTPQVQRERGPQGQGHGRMALNLQLSDTDDNETFDELHIESSDEKSPSDVSLAADTDKSVENLDVLVGFGKSLCGSPEEEEKQVPIPSETRPKTFSFIKQQRVVKRTSSEECVTVIFDAEDGEPIEFSSHQTGVVTVTRNEISINSTPAGPKAEHTELLPQGIACLQPRAAARDYTFFKRSEEDTEKNIPKDNVDNVPRVSTESFSSRTVTQNPQQQKLVKPTHNISCQSNSRSSAPMGIYQKQNLTKIPPRGKSSPQKSKLMEPEATTLLPSSGLVTLEKSPALAPGKLSRFMKTESSGPLFELRSDPHIPKHSAQLPHSSRMPSRRDWVQCPKSQTPGSRSRPAIESSDSGEPPTRDEHCGSGPEAGVKSPSPPPPPGRSVSLLARPSYDYSPAPSSTKSETRVPSETARTPFKSPLLKGISAPVISSNPATTEVQRKKPSVAFKKPIFTHPMPSPEAVIQTRCPAHAPSSSFTVMALGPPKVSPKRGVPKTSPRQTLGTPQRDIGLQTPRISPSTHEPLEMTSSKSVSPGRKGQLNDSASTPPKPSFLGVNESPSSQVSSSSSSSSPAKSHNSPHGCQSAHEKGLKTRLPVGLKVLMKSPQLLRKSSTVPGKHEKDSLNEASKSSVAVNKSKPEDSKNPASMEITAGERNVTLPDSQAQGSLADGLPLETALQEPLESSIPGSDGRDGVDNRSMRRSLSSSKPHLKPALGMNGAKARSHSFSTHSGDKPSTPPIEGSGKVRTQIITNTAERGNSLTRQNSSTESSPNKAPSAPMLESLPSVGRPSGHPSSGKGSLGSSGSFSSQHGSPSKLPLRIPPKSEGLLIPPGKEDQQAFTQGECPSANVAVLGEPGSDRRSCPPTPTDCPEALQSPGRTQHPSTFETSSTSKLETSGRHPDASATATDAVSSEAPLSPTIEEKVMLCIQENVEKGQVQTKPTSVEAKQKPGPSFASWFGFRKSRLPALSSRKMDISKTKVEKKDAKVLGFGNRQLKSERKKEKKKPELQCETENELIKDTKSADNPDGGLQSKNNRRTPQDIYNQLKIEPRNRHSPVACSTKDTFMTELLNRVDKKAAPQTESGSSNASCRNVLKGSSQGSCLIGSSISTQGNHKKNMKIKADMEVPKDSLVKEANENLQEDEDDAVADSVFQSHIIESNCQMRTLDSGIGTFPLPDSGNRSTGRYLCQPDSPEDAEPLLPLQSALSAVSSMRAQTLEREVPSSTDGQRPADSAIVHSTSDPIMTARGMRPLQSRLPKPASSGKVSSQKQNEAEPRPQTCSSFGYAEDPMASQPLPDWGSEVAATGTQDKAPRMCTYSASGGSNSDSDLDYGDNGFGAGRGQLVKALKSAAPEIETT.

The stretch at 71-253 (EKLIHELEEE…DLEQQNRTLS (183 aa)) forms a coiled coil. Disordered stretches follow at residues 351–370 (SSYTWHDGKNLRKRQSSQNW), 736–819 (EEDT…LMEP), 855–997 (PLFE…KKPS), 1026–1469 (SSSF…APLS), 1486–1509 (KGQVQTKPTSVEAKQKPGPSFASW), 1541–1592 (GFGN…RTPQ), 1725–1750 (FPLPDSGNRSTGRYLCQPDSPEDAEP), and 1763–1885 (SMRA…DYGD). Residues 736-748 (EEDTEKNIPKDNV) are compositionally biased toward basic and acidic residues. 4 stretches are compositionally biased toward polar residues: residues 753 to 789 (RVSTESFSSRTVTQNPQQQKLVKPTHNISCQSNSRSS), 950 to 965 (APSSTKSETRVPSETA), 981 to 990 (VISSNPATTE), and 1066 to 1084 (PRISPSTHEPLEMTSSKSV). Composition is skewed to low complexity over residues 1110 to 1131 (SPSSQVSSSSSSSSPAKSHNSP) and 1178 to 1187 (ASKSSVAVNK). Basic and acidic residues predominate over residues 1241 to 1250 (DGRDGVDNRS). The segment covering 1300 to 1325 (QIITNTAERGNSLTRQNSSTESSPNK) has biased composition (polar residues). The segment covering 1339–1366 (GRPSGHPSSGKGSLGSSGSFSSQHGSPS) has biased composition (low complexity). Positions 1428–1446 (PGRTQHPSTFETSSTSKLE) are enriched in polar residues. The span at 1454–1466 (ASATATDAVSSEA) shows a compositional bias: low complexity. Basic and acidic residues-rich tracts occupy residues 1547–1560 (LKSERKKEKKKPEL) and 1567–1576 (ELIKDTKSAD). A compositionally biased stretch (polar residues) spans 1869–1878 (YSASGGSNSD).

As to quaternary structure, interacts with the SH3-containing region of the adapter protein NCK. Expressed in fetal and adult brain, leukocytes and fetal fibroblasts.

This chain is Nck-associated protein 5 (NCKAP5), found in Homo sapiens (Human).